A 260-amino-acid polypeptide reads, in one-letter code: MARTPLIAGNWKMNLDHLQAVATVQKLAFALPKEYYEKVDVAVTVPFTDLRSVQTLIEGDKLAITYGAQDVSQHEAGAYTGEISAQMLAKLGCTWVVVGHSERREYHGESSELVAVKAKAALNQGISPIVCVGEPLEIREAGTHVEYVVEQTRASLAGLTADDLAKTVIAYEPVWAIGTGKVASAADAQEVCAAIRNLIIELAGKEVAEGLRILYGGSVKAETVAEIVGQPDVDGGLVGGASLDGEAFAKLAANAATVVD.

10–12 (NWK) is a substrate binding site. His100 acts as the Electrophile in catalysis. The active-site Proton acceptor is the Glu172. Substrate-binding positions include Gly178, Ser218, and 239–240 (GG).

This sequence belongs to the triosephosphate isomerase family. In terms of assembly, homodimer.

Its subcellular location is the cytoplasm. The catalysed reaction is D-glyceraldehyde 3-phosphate = dihydroxyacetone phosphate. The protein operates within carbohydrate biosynthesis; gluconeogenesis. It participates in carbohydrate degradation; glycolysis; D-glyceraldehyde 3-phosphate from glycerone phosphate: step 1/1. Involved in the gluconeogenesis. Catalyzes stereospecifically the conversion of dihydroxyacetone phosphate (DHAP) to D-glyceraldehyde-3-phosphate (G3P). The sequence is that of Triosephosphate isomerase from Corynebacterium diphtheriae (strain ATCC 700971 / NCTC 13129 / Biotype gravis).